Consider the following 118-residue polypeptide: cAMP-responsive element-binding protein-like 2 (118 aa).

The segment at 1–25 (MDDSKVSGGKVKKPGKRGRKPAKID) is disordered. The span at 10–21 (KVKKPGKRGRKP) shows a compositional bias: basic residues. A bZIP domain is found at 23–86 (KIDLKAKLER…AAMDQGKIPS (64 aa)). The basic motif stretch occupies residues 29–60 (KLERSRQSARECRARKKLRYQYLEELVSSRER). Positions 62-69 (ICALREEL) are leucine-zipper.

Belongs to the bZIP family. ATF subfamily.

It localises to the nucleus. Probable regulator of creb1 transcriptional activity which is involved in adipose cells differentiation. May also play a regulatory role in the cell cycle. The polypeptide is cAMP-responsive element-binding protein-like 2 (crebl2) (Xenopus tropicalis (Western clawed frog)).